We begin with the raw amino-acid sequence, 872 residues long: Dynein regulatory complex subunit 7 (872 aa).

Disordered regions lie at residues 1–40 (MEVL…REET), 231–281 (ESVK…QEEA), and 385–410 (EEED…KSFD). The stretch at 1–64 (MEVLKEKVEE…SEIEVSVPEK (64 aa)) forms a coiled coil. Composition is skewed to basic and acidic residues over residues 16–40 (REEA…REET), 231–240 (ESVKEEEKAP), and 248–281 (PPRD…QEEA). Residues 254-292 (SRFEQEQEMKRQEAIKAEEENRRKQEEARLLEQENAKTD) adopt a coiled-coil conformation. Residues 385–398 (EEEDEGMNDDDDVE) show a composition bias toward acidic residues. The span at 399-409 (NLGKEDEDKSF) shows a compositional bias: basic and acidic residues. Coiled coils occupy residues 676 to 706 (LKNE…EEEE) and 780 to 805 (QRLI…KKQQ).

This sequence belongs to the DRC7 family. Component of the nexin-dynein regulatory complex (N-DRC). Interacts with TCTE1/DRC5. Interacts with DRC3 and GAS8/DRC4.

The protein resides in the cell projection. It localises to the cilium. The protein localises to the flagellum. It is found in the cytoplasm. Its subcellular location is the cytoskeleton. The protein resides in the cilium axoneme. It localises to the flagellum axoneme. In terms of biological role, component of the nexin-dynein regulatory complex (N-DRC) a key regulator of ciliary/flagellar motility which maintains the alignment and integrity of the distal axoneme and regulates microtubule sliding in motile axonemes. Involved in the regulation of flagellar motility. Essential for male fertility, sperm head morphogenesis and sperm flagellum formation. The chain is Dynein regulatory complex subunit 7 (DRC7) from Bos taurus (Bovine).